The chain runs to 542 residues: uncharacterized protein (542 aa).

The segment at 256–275 (KKSTTTSSPPITTTHLSKPE) is disordered. A compositionally biased stretch (low complexity) spans 258–269 (STTTSSPPITTT).

This is an uncharacterized protein from Caenorhabditis elegans.